Here is a 569-residue protein sequence, read N- to C-terminus: Sulfite reductase [NADPH] hemoprotein beta-component (569 aa).

4 residues coordinate [4Fe-4S] cluster: C433, C439, C478, and C482. C482 is a siroheme binding site.

The protein belongs to the nitrite and sulfite reductase 4Fe-4S domain family. Alpha(8)-beta(8). The alpha component is a flavoprotein, the beta component is a hemoprotein. It depends on siroheme as a cofactor. [4Fe-4S] cluster is required as a cofactor.

The enzyme catalyses hydrogen sulfide + 3 NADP(+) + 3 H2O = sulfite + 3 NADPH + 4 H(+). It functions in the pathway sulfur metabolism; hydrogen sulfide biosynthesis; hydrogen sulfide from sulfite (NADPH route): step 1/1. Functionally, component of the sulfite reductase complex that catalyzes the 6-electron reduction of sulfite to sulfide. This is one of several activities required for the biosynthesis of L-cysteine from sulfate. In Pseudoalteromonas atlantica (strain T6c / ATCC BAA-1087), this protein is Sulfite reductase [NADPH] hemoprotein beta-component.